A 191-amino-acid chain; its full sequence is Cathelicidin-related antimicrobial peptide Na_CRAMP (191 aa).

The N-terminal stretch at 1–22 (MEGFFWKTLLVVGALTISGTSS) is a signal peptide. A propeptide spanning residues 23 to 161 (FPHKPLTYEE…DQPKRVKRFK (139 aa)) is cleaved from the precursor. Cystine bridges form between Cys81–Cys92 and Cys103–Cys120. Residues 126–154 (EEEQKQEEGNEEEKEVEKEEKEEDQKDQP) form a disordered region. Positions 140-154 (EVEKEEKEEDQKDQP) are enriched in basic and acidic residues.

Belongs to the cathelicidin family. Expressed by the venom gland.

The protein localises to the secreted. The protein resides in the target cell membrane. Its function is as follows. Potent antimicrobial peptide against most of Gram-negative bacteria, some Gram-positive bacteria (Bacillus) and some fungi. Adopts an amphipathic alpha helical conformation, that may allow to partition into the target membrane. No hemolytic and cytotoxic activities have been observed on mammalian cells. The sequence is that of Cathelicidin-related antimicrobial peptide Na_CRAMP from Naja atra (Chinese cobra).